Here is a 314-residue protein sequence, read N- to C-terminus: Vomeronasal type-1 receptor 95 (314 aa).

Residues 1 to 18 (MNKDNTLYCSAYRIAFFS) are Extracellular-facing. The chain crosses the membrane as a helical span at residues 19–39 (EIGIGISANSCLLLFHTFMFI). Over 40–48 (RGHRPRLTD) the chain is Cytoplasmic. The helical transmembrane segment at 49 to 69 (LPIGLVALIHLVMLLLAAYIT) threads the bilayer. Residues 70–88 (EDFFMSSGGWDDITCKLFI) lie on the Extracellular side of the membrane. A disulfide bridge links Cys84 with Cys171. The chain crosses the membrane as a helical span at residues 89-113 (FLHRFFRSLSVCDTCMLSVFQAIIL). Residues 114-133 (CPQSSHLAKFKLNSPHHLSC) lie on the Cytoplasmic side of the membrane. A helical membrane pass occupies residues 134-154 (FFIFMSIFYTSISSHILIAAI). Over 155 to 186 (ATQNLTSVNLIYITKSCSFLPMSSSMQRTFST) the chain is Extracellular. Residue Asn158 is glycosylated (N-linked (GlcNAc...) asparagine). The helical transmembrane segment at 187–207 (LLAFRNVFLIGLMGLSTCYMA) threads the bilayer. The Cytoplasmic portion of the chain corresponds to 208 to 235 (TLLCRHKTRSQQLQNSKLSPKATPEQRA). Residues 236-256 (IWTILMLMSFFLIISTFDSIM) traverse the membrane as a helical segment. The Extracellular segment spans residues 257 to 268 (TYSRTIFQGNQS). A glycan (N-linked (GlcNAc...) asparagine) is linked at Asn266. A helical membrane pass occupies residues 269-289 (LYCVQIPVAHGYAAFSPLLVL). At 290 to 314 (NNEKRLTSLMISMYDRIVRLESLCS) the chain is on the cytoplasmic side.

Belongs to the G-protein coupled receptor 1 family.

The protein localises to the cell membrane. Functionally, putative pheromone receptor implicated in the regulation of social as well as reproductive behavior. The sequence is that of Vomeronasal type-1 receptor 95 (Vom1r95) from Rattus norvegicus (Rat).